The sequence spans 394 residues: Probable fatty acid methyltransferase (394 aa).

Residues 128–129, 163–171, and 189–194 each bind S-adenosyl-L-methionine; these read YS, LLDVGCGWG, and TLSKEQ. The active site involves Cys358.

Belongs to the CFA/CMAS family.

The protein is Probable fatty acid methyltransferase of Pseudomonas putida (Arthrobacter siderocapsulatus).